The following is a 367-amino-acid chain: tRNA-specific 2-thiouridylase MnmA (367 aa).

ATP contacts are provided by residues 13–20 (GLSGGVDS) and Met39. Positions 99–101 (NPD) are interaction with target base in tRNA. Cys104 functions as the Nucleophile in the catalytic mechanism. A disulfide bond links Cys104 and Cys200. An ATP-binding site is contributed by Gly128. The segment at 150–152 (KDQ) is interaction with tRNA. The active-site Cysteine persulfide intermediate is the Cys200. The interval 307 to 308 (RY) is interaction with tRNA.

The protein belongs to the MnmA/TRMU family.

Its subcellular location is the cytoplasm. It catalyses the reaction S-sulfanyl-L-cysteinyl-[protein] + uridine(34) in tRNA + AH2 + ATP = 2-thiouridine(34) in tRNA + L-cysteinyl-[protein] + A + AMP + diphosphate + H(+). Catalyzes the 2-thiolation of uridine at the wobble position (U34) of tRNA, leading to the formation of s(2)U34. The chain is tRNA-specific 2-thiouridylase MnmA from Neisseria meningitidis serogroup B (strain ATCC BAA-335 / MC58).